A 532-amino-acid chain; its full sequence is CTP synthase (532 aa).

The interval 1–268 is amidoligase domain; that stretch reads MTTKYIFVTG…DEIVCDHLNL (268 aa). S14 contacts CTP. S14 is a UTP binding site. 15-20 lines the ATP pocket; the sequence is SLGKGI. Y55 provides a ligand contact to L-glutamine. Position 72 (D72) interacts with ATP. 2 residues coordinate Mg(2+): D72 and E142. Residues 149–151, 189–194, and K225 contribute to the CTP site; these read DIE and KSKPTQ. Residues 189–194 and K225 each bind UTP; that span reads KSKPTQ. Residue 241 to 243 participates in ATP binding; it reads RDA. The region spanning 293-532 is the Glutamine amidotransferase type-1 domain; sequence KIALVGKYVA…REFIQASLRK (240 aa). G355 is a binding site for L-glutamine. C382 functions as the Nucleophile; for glutamine hydrolysis in the catalytic mechanism. L-glutamine-binding positions include 383–386, E406, and R463; that span reads LGMQ. Catalysis depends on residues H508 and E510.

The protein belongs to the CTP synthase family. In terms of assembly, homotetramer.

The enzyme catalyses UTP + L-glutamine + ATP + H2O = CTP + L-glutamate + ADP + phosphate + 2 H(+). It catalyses the reaction L-glutamine + H2O = L-glutamate + NH4(+). The catalysed reaction is UTP + NH4(+) + ATP = CTP + ADP + phosphate + 2 H(+). The protein operates within pyrimidine metabolism; CTP biosynthesis via de novo pathway; CTP from UDP: step 2/2. Allosterically activated by GTP, when glutamine is the substrate; GTP has no effect on the reaction when ammonia is the substrate. The allosteric effector GTP functions by stabilizing the protein conformation that binds the tetrahedral intermediate(s) formed during glutamine hydrolysis. Inhibited by the product CTP, via allosteric rather than competitive inhibition. Its function is as follows. Catalyzes the ATP-dependent amination of UTP to CTP with either L-glutamine or ammonia as the source of nitrogen. Regulates intracellular CTP levels through interactions with the four ribonucleotide triphosphates. The polypeptide is CTP synthase (Halalkalibacterium halodurans (strain ATCC BAA-125 / DSM 18197 / FERM 7344 / JCM 9153 / C-125) (Bacillus halodurans)).